The chain runs to 402 residues: UPF0261 protein BPP1817 (402 aa).

The protein belongs to the UPF0261 family.

This is UPF0261 protein BPP1817 from Bordetella parapertussis (strain 12822 / ATCC BAA-587 / NCTC 13253).